The chain runs to 163 residues: Neurotrophin-3 (163 aa).

A signal peptide spans 1-3; it reads IQS. A propeptide spanning residues 4–119 is cleaved from the precursor; sequence TSMDQGILTE…VLNRTSRRKR (116 aa). An N-linked (GlcNAc...) asparagine glycan is attached at N112.

It belongs to the NGF-beta family.

The protein resides in the secreted. Seems to promote the survival of visceral and proprioceptive sensory neurons. The polypeptide is Neurotrophin-3 (NTF3) (Eryx colubrinus colubrinus).